The primary structure comprises 832 residues: DNA polymerase I, thermostable (832 aa).

One can recognise a 5'-3' exonuclease domain in the interval 175 to 260 (RPDQWADYRA…DLPLEVDFAK (86 aa)). The tract at residues 410 to 832 (ERLFANLWGR…IGEDWLSAKE (423 aa)) is polymerase.

The protein belongs to the DNA polymerase type-A family.

It carries out the reaction DNA(n) + a 2'-deoxyribonucleoside 5'-triphosphate = DNA(n+1) + diphosphate. In terms of biological role, in addition to polymerase activity, this DNA polymerase exhibits 5'-3' exonuclease activity. Unlikely to have 3'-5' exonuclease activity due to absence of a 3'-5' exonuclease domain. The chain is DNA polymerase I, thermostable (polA) from Thermus aquaticus.